Consider the following 499-residue polypeptide: Putative hydrolase YuaR (499 aa).

Residues 1–26 (MRVIMKPLRRTLVFFIFSVFLCGTVS) form the signal peptide. Positions 94–393 (GSVIIISGGP…DAFPAVNFER (300 aa)) constitute an AB hydrolase-1 domain. Ser207 serves as the catalytic Nucleophile. Asp433 is a catalytic residue. The Proton donor role is filled by His460.

Belongs to the peptidase S33 family.

This chain is Putative hydrolase YuaR (yuaR), found in Escherichia coli (strain K12).